The primary structure comprises 329 residues: Ferredoxin--NADP reductase 2 (329 aa).

Residues threonine 18, glutamate 37, glutamine 45, tyrosine 50, valine 90, phenylalanine 124, aspartate 285, and serine 326 each coordinate FAD.

The protein belongs to the ferredoxin--NADP reductase type 2 family. As to quaternary structure, homodimer. FAD serves as cofactor.

It carries out the reaction 2 reduced [2Fe-2S]-[ferredoxin] + NADP(+) + H(+) = 2 oxidized [2Fe-2S]-[ferredoxin] + NADPH. The chain is Ferredoxin--NADP reductase 2 from Bacillus mycoides (strain KBAB4) (Bacillus weihenstephanensis).